The primary structure comprises 95 residues: Phosphoribosyl-ATP pyrophosphatase (95 aa).

It belongs to the PRA-PH family.

It is found in the cytoplasm. The catalysed reaction is 1-(5-phospho-beta-D-ribosyl)-ATP + H2O = 1-(5-phospho-beta-D-ribosyl)-5'-AMP + diphosphate + H(+). The protein operates within amino-acid biosynthesis; L-histidine biosynthesis; L-histidine from 5-phospho-alpha-D-ribose 1-diphosphate: step 2/9. This is Phosphoribosyl-ATP pyrophosphatase from Methanocella arvoryzae (strain DSM 22066 / NBRC 105507 / MRE50).